We begin with the raw amino-acid sequence, 256 residues long: Major prion protein (256 aa).

Positions 1 to 24 are cleaved as a signal peptide; the sequence is MVKSHIGSWILVLFVAMWSDVGLC. The interaction with GRB2, ERI3 and SYN1 stretch occupies residues 25 to 233; the sequence is KKRPKPGGGW…ESQAYYQRGA (209 aa). Residues 28 to 110 are disordered; that stretch reads PKPGGGWNTG…QWNKPSKPKT (83 aa). 5 repeat units span residues 54–62, 63–70, 71–78, 79–86, and 87–95. Residues 54-95 are 5 X 8 AA tandem repeats of P-H-G-G-G-W-G-Q; that stretch reads PQGGGGWGQPHGGGWGQPHGGGWGQPHGGGWGQPHGGGGWGQ. The span at 55–97 shows a compositional bias: gly residues; that stretch reads QGGGGWGQPHGGGWGQPHGGGWGQPHGGGWGQPHGGGGWGQGG. Residues histidine 64, glycine 65, glycine 66, histidine 72, glycine 73, glycine 74, histidine 80, glycine 81, glycine 82, histidine 88, glycine 90, and glycine 91 each coordinate Cu(2+). Cysteine 182 and cysteine 217 are joined by a disulfide. Residues asparagine 184 and asparagine 200 are each glycosylated (N-linked (GlcNAc...) asparagine). A lipid anchor (GPI-anchor amidated alanine) is attached at alanine 233. The propeptide at 234 to 256 is removed in mature form; the sequence is SVILFSSPPVILLISFLIFLIVG.

It belongs to the prion family. Monomer and homodimer. Has a tendency to aggregate into amyloid fibrils containing a cross-beta spine, formed by a steric zipper of superposed beta-strands. Soluble oligomers may represent an intermediate stage on the path to fibril formation. Copper binding may promote oligomerization. Interacts with GRB2, APP, ERI3/PRNPIP and SYN1. Mislocalized cytosolically exposed PrP interacts with MGRN1; this interaction alters MGRN1 subcellular location and causes lysosomal enlargement. Interacts with KIAA1191.

The protein resides in the cell membrane. The protein localises to the golgi apparatus. Functionally, its primary physiological function is unclear. Has cytoprotective activity against internal or environmental stresses. May play a role in neuronal development and synaptic plasticity. May be required for neuronal myelin sheath maintenance. May play a role in iron uptake and iron homeostasis. Soluble oligomers are toxic to cultured neuroblastoma cells and induce apoptosis (in vitro). Association with GPC1 (via its heparan sulfate chains) targets PRNP to lipid rafts. Also provides Cu(2+) or Zn(2+) for the ascorbate-mediated GPC1 deaminase degradation of its heparan sulfate side chains. The protein is Major prion protein (PRNP) of Budorcas taxicolor (Golden takin).